Reading from the N-terminus, the 141-residue chain is Hemoglobin subunit alpha-1/2 (141 aa).

The region spanning 1 to 141 (VLSPADKKNV…VSTVLTSKYR (141 aa)) is the Globin domain. Position 3 is a phosphoserine (S3). N6-succinyllysine is present on residues K7 and K11. K16 carries the post-translational modification N6-acetyllysine; alternate. At K16 the chain carries N6-succinyllysine; alternate. Y24 is modified (phosphotyrosine). S35 bears the Phosphoserine mark. K40 carries the post-translational modification N6-succinyllysine. S49 bears the Phosphoserine mark. H58 lines the O2 pocket. H87 contacts heme b. The residue at position 102 (S102) is a Phosphoserine. T108 carries the post-translational modification Phosphothreonine. Phosphoserine is present on residues S124 and S131. Residues T134 and T137 each carry the phosphothreonine modification. S138 carries the phosphoserine modification.

The protein belongs to the globin family. In terms of assembly, heterotetramer of two alpha chains and two beta chains. In terms of tissue distribution, red blood cells.

Involved in oxygen transport from the lung to the various peripheral tissues. The polypeptide is Hemoglobin subunit alpha-1/2 (Mandrillus sphinx (Mandrill)).